The chain runs to 371 residues: tRNA-specific 2-thiouridylase MnmA (371 aa).

ATP-binding positions include 8–15 and Met-34; that span reads GMSGGVDS. Residues 94–96 are interaction with target base in tRNA; it reads NPD. Catalysis depends on Cys-99, which acts as the Nucleophile. Cysteines 99 and 195 form a disulfide. An ATP-binding site is contributed by Gly-123. The interaction with tRNA stretch occupies residues 145-147; that stretch reads KDQ. Cys-195 functions as the Cysteine persulfide intermediate in the catalytic mechanism. The segment at 309–310 is interaction with tRNA; it reads RY.

Belongs to the MnmA/TRMU family.

It is found in the cytoplasm. It catalyses the reaction S-sulfanyl-L-cysteinyl-[protein] + uridine(34) in tRNA + AH2 + ATP = 2-thiouridine(34) in tRNA + L-cysteinyl-[protein] + A + AMP + diphosphate + H(+). Catalyzes the 2-thiolation of uridine at the wobble position (U34) of tRNA, leading to the formation of s(2)U34. The protein is tRNA-specific 2-thiouridylase MnmA of Methylococcus capsulatus (strain ATCC 33009 / NCIMB 11132 / Bath).